The primary structure comprises 513 residues: Serine/threonine-protein kinase PBL27 (513 aa).

The segment at 1–61 is disordered; the sequence is MSGCLPCFGS…KKELTAPKEG (61 aa). Residues Cys4 and Cys7 are each lipidated (S-palmitoyl cysteine). Basic and acidic residues-rich tracts occupy residues 15-27 and 38-57; these read AASK…ELSA and ISLD…ELTA. Residues 83–360 form the Protein kinase domain; it reads FRPECLLGEG…GDVVTALTYL (278 aa). Residues 89 to 97 and Lys112 each bind ATP; that span reads LGEGGFGRV. Asp210 serves as the catalytic Proton acceptor. The residue at position 244 (Ser244) is a Phosphoserine; by CERK1. Phosphothreonine; by CERK1 is present on residues Thr245 and Thr250. A compositionally biased stretch (polar residues) spans 365–378; the sequence is FDPNAPSGQNSRSG. Residues 365 to 513 are disordered; that stretch reads FDPNAPSGQN…GPGSFDSTND (149 aa). A phosphoserine mark is found at Ser392 and Ser401. Basic and acidic residues predominate over residues 417–428; sequence NSPDYRRRDMVR. A compositionally biased stretch (gly residues) spans 434–446; that stretch reads SEGGSETGGGSGR. Residues 456–473 are compositionally biased toward polar residues; it reads QESQRGSPASVGRSSRGT. Residues 475–486 are compositionally biased toward basic and acidic residues; that stretch reads RNRDLDRERAVA. Residues 504-513 are compositionally biased toward polar residues; it reads GPGSFDSTND.

Belongs to the protein kinase superfamily. Ser/Thr protein kinase family. As to quaternary structure, interacts with CERK1 (preferentially unphosphorylated) at the plasma membrane. Binds to MAPKKK5 at the plasma membrane; disassociation is induced by chitin perception by the CERK1 complex. Also associates with MAPKKK3. In terms of processing, phosphorylated by CERK1 upon elicitation by chitin. Palmitoylation at Cys-4 and Cys-7 are required for plasma membrane location.

The protein resides in the cell membrane. It carries out the reaction L-seryl-[protein] + ATP = O-phospho-L-seryl-[protein] + ADP + H(+). The catalysed reaction is L-threonyl-[protein] + ATP = O-phospho-L-threonyl-[protein] + ADP + H(+). In terms of biological role, receptor-like cytoplasmic kinase involved in the transduction of signal between the host cell surface chitin receptor complex CERK1-LYK5 and the intracellular MAPKKK5-dependent mitogen-activated protein kinase (MAPK) cascade that leads to chitin-induced immunity. Phosphorylates and activates MAPKKK5 when phosphorylated by CERK1 after elicitation by chitin. This is Serine/threonine-protein kinase PBL27 from Arabidopsis thaliana (Mouse-ear cress).